The following is a 73-amino-acid chain: Disintegrin molossin (73 aa).

A Disintegrin domain is found at 1 to 73 (EAGIECDCGS…ADCPRNRFHA (73 aa)). Cystine bridges form between C6/C21, C8/C16, C15/C38, C29/C35, C34/C59, and C47/C66. The short motif at 51 to 53 (RGD) is the Cell attachment site element.

It belongs to the venom metalloproteinase (M12B) family. P-II subfamily. P-IIa sub-subfamily. Monomer (disintegrin). In terms of tissue distribution, expressed by the venom gland.

It is found in the secreted. Inhibits fibrinogen interaction with platelets. Acts by binding to alpha-IIb/beta-3 (ITGA2B/ITGB3) on the platelet surface and inhibits aggregation induced by ADP, thrombin, platelet-activating factor and collagen. The chain is Disintegrin molossin from Crotalus molossus molossus (Northern black-tailed rattlesnake).